Here is a 350-residue protein sequence, read N- to C-terminus: tRNA dimethylallyltransferase (350 aa).

The tract at residues 1–20 (MMNTERPAGPLRPPHPPHPP) is disordered. Residues 10-20 (PLRPPHPPHPP) show a composition bias toward pro residues. ATP is bound at residue 27–34 (GPTASGKT). 29–34 (TASGKT) contributes to the substrate binding site. 3 interaction with substrate tRNA regions span residues 52-55 (DSAL), 176-180 (QRIAR), and 273-278 (RCVGYR).

Belongs to the IPP transferase family. Monomer. The cofactor is Mg(2+).

It carries out the reaction adenosine(37) in tRNA + dimethylallyl diphosphate = N(6)-dimethylallyladenosine(37) in tRNA + diphosphate. Its function is as follows. Catalyzes the transfer of a dimethylallyl group onto the adenine at position 37 in tRNAs that read codons beginning with uridine, leading to the formation of N6-(dimethylallyl)adenosine (i(6)A). The protein is tRNA dimethylallyltransferase of Albidiferax ferrireducens (strain ATCC BAA-621 / DSM 15236 / T118) (Rhodoferax ferrireducens).